The sequence spans 1024 residues: RNA cytidine acetyltransferase (1024 aa).

An ATP-binding site is contributed by 287-296 (GRGKSAALGL). Lysine 426 is subject to N6-acetyllysine. Arginine 470 is a binding site for ATP. The 196-residue stretch at 558-753 (CLLPPVPPTQ…HSCIMLKTLA (196 aa)) folds into the N-acetyltransferase domain. Acetyl-CoA-binding positions include 629 to 631 (IAV) and 636 to 642 (QGMGYGS). The interval 702 to 1024 (PAERLDYLGV…RKDMKLKRKK (323 aa)) is required for localization to the nucleolus and midbody. Threonine 716 carries the post-translational modification Phosphothreonine. Arginine 725 contributes to the acetyl-CoA binding site. Phosphoserine is present on residues serine 934, serine 984, and serine 987. A disordered region spans residues 990 to 1024 (SDKKRKLETKQEPKQSKKLKKRDNNRKDMKLKRKK). The segment covering 1005–1024 (SKKLKKRDNNRKDMKLKRKK) has biased composition (basic residues).

It belongs to the RNA cytidine acetyltransferase family. NAT10 subfamily. In terms of assembly, part of the small subunit (SSU) processome, composed of more than 70 proteins and the RNA chaperone small nucleolar RNA (snoRNA) U3. Interacts with THUMPD1. Interacts with SUN1 (via N-terminus). Interacts with TERT.

The protein resides in the nucleus. It is found in the nucleolus. It catalyses the reaction a cytidine in 18S rRNA + acetyl-CoA + ATP + H2O = an N(4)-acetylcytidine in 18S rRNA + ADP + phosphate + CoA + H(+). The enzyme catalyses a cytidine in tRNA + acetyl-CoA + ATP + H2O = an N(4)-acetylcytidine in tRNA + ADP + phosphate + CoA + H(+). It carries out the reaction a cytidine in mRNA + acetyl-CoA + ATP + H2O = an N(4)-acetylcytidine in mRNA + ADP + phosphate + CoA + H(+). In terms of biological role, RNA cytidine acetyltransferase that catalyzes the formation of N(4)-acetylcytidine (ac4C) modification on mRNAs, 18S rRNA and tRNAs. Catalyzes ac4C modification of a broad range of mRNAs, enhancing mRNA stability and translation. mRNA ac4C modification is frequently present within wobble cytidine sites and promotes translation efficiency. Mediates the formation of ac4C at position 1842 in 18S rRNA. May also catalyze the formation of ac4C at position 1337 in 18S rRNA. Required for early nucleolar cleavages of precursor rRNA at sites A0, A1 and A2 during 18S rRNA synthesis. Catalyzes the formation of ac4C in serine and leucine tRNAs. Requires the tRNA-binding adapter protein THUMPD1 for full tRNA acetyltransferase activity but not for 18S rRNA acetylation. In addition to RNA acetyltransferase activity, also able to acetylate lysine residues of proteins, such as histones, microtubules, p53/TP53 and MDM2, in vitro. The relevance of the protein lysine acetyltransferase activity is however unsure in vivo. Activates telomerase activity by stimulating the transcription of TERT, and may also regulate telomerase function by affecting the balance of telomerase subunit assembly, disassembly, and localization. Involved in the regulation of centrosome duplication by acetylating CENATAC during mitosis, promoting SASS6 proteasome degradation. Part of the small subunit (SSU) processome, first precursor of the small eukaryotic ribosomal subunit. During the assembly of the SSU processome in the nucleolus, many ribosome biogenesis factors, an RNA chaperone and ribosomal proteins associate with the nascent pre-rRNA and work in concert to generate RNA folding, modifications, rearrangements and cleavage as well as targeted degradation of pre-ribosomal RNA by the RNA exosome. The chain is RNA cytidine acetyltransferase from Mus musculus (Mouse).